The primary structure comprises 308 residues: Dual oxidase maturation factor 1 (308 aa).

Residues 1-21 (MQANIFPFYPQPRTSFKFDTK) lie on the Extracellular side of the membrane. Residues 22–42 (IIEIIIICIVTACTFIIILPG) traverse the membrane as a helical segment. The Cytoplasmic portion of the chain corresponds to 43–49 (IRGKSRS). The chain crosses the membrane as a helical span at residues 50 to 70 (IWLFRILTSLFIGAVILAVNF). The Extracellular segment spans residues 71–172 (TSDWETGIVT…SPCGLFQQYC (102 aa)). N94, N107, and N119 each carry an N-linked (GlcNAc...) asparagine glycan. A helical membrane pass occupies residues 173–195 (ISTYYSSEIMWVAFGSWILYNVL). Over 196 to 199 (FSMP) the chain is Cytoplasmic. A helical membrane pass occupies residues 200–220 (VILYGICMMFVTAICMLVSLI). Residues 221 to 247 (SFASVRQAPVCNIHFGNAVLKTHFGVS) are Extracellular-facing. Residues 248–268 (YWLSLVTGLFCLIVSLVLLFL) form a helical membrane-spanning segment. At 269-308 (YKTQPKVIRLIFSYGEEEDLSDKSENEEEHSSALSLNEML) the chain is on the cytoplasmic side.

This sequence belongs to the DUOXA family.

Its subcellular location is the membrane. Functionally, possible role in maturation and transport from the endoplasmic reticulum to the plasma membrane of functional dual oxidase. This Xenopus tropicalis (Western clawed frog) protein is Dual oxidase maturation factor 1 (duoxa1).